The chain runs to 647 residues: Acetyl-coenzyme A synthetase (647 aa).

CoA is bound by residues 190-193 and Thr-310; that span reads RGGR. ATP is bound by residues 386–388, 410–415, Asp-499, and Arg-514; these read GEP and DTWWQT. CoA is bound at residue Ser-522. Arg-525 contributes to the ATP binding site. Mg(2+) contacts are provided by Val-536, His-538, and Val-541. Position 583 (Arg-583) interacts with CoA. At Lys-608 the chain carries N6-acetyllysine.

The protein belongs to the ATP-dependent AMP-binding enzyme family. It depends on Mg(2+) as a cofactor. In terms of processing, acetylated. Deacetylation by the SIR2-homolog deacetylase activates the enzyme.

The catalysed reaction is acetate + ATP + CoA = acetyl-CoA + AMP + diphosphate. Its function is as follows. Catalyzes the conversion of acetate into acetyl-CoA (AcCoA), an essential intermediate at the junction of anabolic and catabolic pathways. AcsA undergoes a two-step reaction. In the first half reaction, AcsA combines acetate with ATP to form acetyl-adenylate (AcAMP) intermediate. In the second half reaction, it can then transfer the acetyl group from AcAMP to the sulfhydryl group of CoA, forming the product AcCoA. This Xylella fastidiosa (strain Temecula1 / ATCC 700964) protein is Acetyl-coenzyme A synthetase.